A 312-amino-acid chain; its full sequence is Malate dehydrogenase (312 aa).

NAD(+)-binding positions include 7-13 and aspartate 34; that span reads GASGGIG. Residues arginine 81 and arginine 87 each coordinate substrate. NAD(+)-binding positions include asparagine 94 and 117–119; that span reads ITN. Substrate-binding residues include asparagine 119 and arginine 153. Catalysis depends on histidine 177, which acts as the Proton acceptor. Methionine 227 serves as a coordination point for NAD(+).

It belongs to the LDH/MDH superfamily. MDH type 1 family. In terms of assembly, homodimer.

It carries out the reaction (S)-malate + NAD(+) = oxaloacetate + NADH + H(+). Functionally, catalyzes the reversible oxidation of malate to oxaloacetate. In Actinobacillus succinogenes (strain ATCC 55618 / DSM 22257 / CCUG 43843 / 130Z), this protein is Malate dehydrogenase.